The following is a 117-amino-acid chain: Small ribosomal subunit protein bS6 (117 aa).

Belongs to the bacterial ribosomal protein bS6 family.

Binds together with bS18 to 16S ribosomal RNA. The chain is Small ribosomal subunit protein bS6 from Porphyromonas gingivalis (strain ATCC BAA-308 / W83).